The primary structure comprises 173 residues: MFIVFYLILIIFIFIYFHVYINLKIKSNSILRKFKSEVDKTIIEINQATDRNINIIEIKIESLNRIIKEVDERIEILDQRLLGFNNSSIPGNSPSSFGSKSDGIYKSNLDYSMPTIEKNIIKESYNVRNQIILLHEQGMSFEAIAKKFKLDLGEVELIISIHRGGVHEKMDRY.

A helical membrane pass occupies residues 1–21 (MFIVFYLILIIFIFIYFHVYI).

It to T.pallidum TP0711.

The protein localises to the membrane. This is an uncharacterized protein from Borreliella burgdorferi (strain ATCC 35210 / DSM 4680 / CIP 102532 / B31) (Borrelia burgdorferi).